Here is a 362-residue protein sequence, read N- to C-terminus: MRDDTCDYLSLFLNDTPLLDVRAPVEFAKGAFPGTTNLALINDEERHRIGICYKQHGQQAAIDLGNTLVCGEERERRLYAWQQWWQANPNGYLYCFRGGLRSQTTQAWLREIGIDAPLVTGGYKALRRFLIDEMEACIANLPLEVLCGRTGCAKTRVIEQQPNAIDLEGLAHHRGSSFGRRPGGQPSQIDFENSLSIALIKQRAAQPVSILVEDESKLIGRCHLPFSLQDQIKSQPRIIIEESLESRVQVTLEDYVIGPLQEYARYFGEHDALKQLGDELLASMDRIRRRLGGIRHQQLRQQLQEALAVQANCGNTELHREWIHSLLADYYDPMYDYMLSRRAGTILFQGSRAEVSAFLNSR.

The region spanning 12–135 is the Rhodanese domain; the sequence is FLNDTPLLDV…LRRFLIDEME (124 aa). The S-selanylcysteine intermediate role is filled by cysteine 95.

Belongs to the SelU family. As to quaternary structure, monomer.

The catalysed reaction is 5-methylaminomethyl-2-thiouridine(34) in tRNA + selenophosphate + (2E)-geranyl diphosphate + H2O + H(+) = 5-methylaminomethyl-2-selenouridine(34) in tRNA + (2E)-thiogeraniol + phosphate + diphosphate. The enzyme catalyses 5-methylaminomethyl-2-thiouridine(34) in tRNA + (2E)-geranyl diphosphate = 5-methylaminomethyl-S-(2E)-geranyl-thiouridine(34) in tRNA + diphosphate. It catalyses the reaction 5-methylaminomethyl-S-(2E)-geranyl-thiouridine(34) in tRNA + selenophosphate + H(+) = 5-methylaminomethyl-2-(Se-phospho)selenouridine(34) in tRNA + (2E)-thiogeraniol. It carries out the reaction 5-methylaminomethyl-2-(Se-phospho)selenouridine(34) in tRNA + H2O = 5-methylaminomethyl-2-selenouridine(34) in tRNA + phosphate. Its function is as follows. Involved in the post-transcriptional modification of the uridine at the wobble position (U34) of tRNA(Lys), tRNA(Glu) and tRNA(Gln). Catalyzes the conversion of 2-thiouridine (S2U-RNA) to 2-selenouridine (Se2U-RNA). Acts in a two-step process involving geranylation of 2-thiouridine (S2U) to S-geranyl-2-thiouridine (geS2U) and subsequent selenation of the latter derivative to 2-selenouridine (Se2U) in the tRNA chain. This is tRNA 2-selenouridine synthase from Alcanivorax borkumensis (strain ATCC 700651 / DSM 11573 / NCIMB 13689 / SK2).